The chain runs to 228 residues: Ankyrin repeat domain-containing protein 46 (228 aa).

ANK repeat units follow at residues 11–40 (QTNV…DPNI), 44–73 (RGRT…DLLA), 77–103 (QGNT…KIDI), and 107–138 (QGAT…EVKG). The chain crosses the membrane as a helical span at residues 195–215 (VLLLIFVIALLSLGIAYYVSG).

The protein localises to the membrane. In Pongo abelii (Sumatran orangutan), this protein is Ankyrin repeat domain-containing protein 46 (ANKRD46).